Consider the following 235-residue polypeptide: C-type lectin domain family 2 member D-related protein (235 aa).

Residues 1–50 (MPSSAHLQDPPPHLSRTLTQDEEQTSLRQSSSCGPSTTSASASESLSGST) are disordered. At 1–75 (MPSSAHLQDP…KIIPTESAAK (75 aa)) the chain is on the cytoplasmic side. Positions 30 to 50 (SSSCGPSTTSASASESLSGST) are enriched in low complexity. A helical; Signal-anchor for type II membrane protein transmembrane segment spans residues 76 to 96 (LLCCYAVFMALTVVVIALSIA). Topologically, residues 97–235 (LSVKKTPQIS…KLNSYTSQCP (139 aa)) are extracellular. Positions 121 to 232 (FGNKCYYFNE…ICSKLNSYTS (112 aa)) constitute a C-type lectin domain. An N-linked (GlcNAc...) asparagine glycan is attached at asparagine 134.

The protein localises to the cell membrane. Lectin-type cell surface receptor. The polypeptide is C-type lectin domain family 2 member D-related protein (Rattus norvegicus (Rat)).